A 94-amino-acid chain; its full sequence is Acylphosphatase (94 aa).

Positions 3-90 (RVHVIVEGRV…PDEKQFRIMY (88 aa)) constitute an Acylphosphatase-like domain. Residues arginine 18 and asparagine 36 contribute to the active site.

This sequence belongs to the acylphosphatase family.

The catalysed reaction is an acyl phosphate + H2O = a carboxylate + phosphate + H(+). The polypeptide is Acylphosphatase (acyP) (Geobacillus thermodenitrificans (strain NG80-2)).